A 407-amino-acid polypeptide reads, in one-letter code: Dephospho-CoA kinase (407 aa).

Residues 3-204 (RIGLTGGIGA…QPFAHNLAQR (202 aa)) form the DPCK domain. 11–16 (GAGKSL) is a binding site for ATP. The UPF0157 stretch occupies residues 196 to 407 (PFAHNLAQRQ…EWADAVHWRP (212 aa)).

The protein in the N-terminal section; belongs to the CoaE family. This sequence in the C-terminal section; belongs to the UPF0157 (GrpB) family.

It is found in the cytoplasm. The enzyme catalyses 3'-dephospho-CoA + ATP = ADP + CoA + H(+). The protein operates within cofactor biosynthesis; coenzyme A biosynthesis; CoA from (R)-pantothenate: step 5/5. Its function is as follows. Catalyzes the phosphorylation of the 3'-hydroxyl group of dephosphocoenzyme A to form coenzyme A. The chain is Dephospho-CoA kinase from Mycobacterium bovis (strain ATCC BAA-935 / AF2122/97).